A 495-amino-acid chain; its full sequence is Glutelin type-B 2 (495 aa).

The N-terminal stretch at 1–24 (MATTIFSRFSIYFCAMLLCQGSMA) is a signal peptide. Disulfide bonds link Cys45/Cys78 and Cys121/Cys305. 2 consecutive Cupin type-1 domains span residues 50–245 (LQAF…VAAK) and 311–460 (VNIE…EQAR). The interval 464-495 (NNRGEEHGAFTPRFQQQYYPGFSNESESETSE) is disordered.

Belongs to the 11S seed storage protein (globulins) family. In terms of assembly, hexamer; each subunit is composed of an acidic and a basic chain derived from a single precursor and linked by a disulfide bond.

Functionally, seed storage protein. The protein is Glutelin type-B 2 (GLUB2) of Oryza sativa subsp. japonica (Rice).